An 852-amino-acid polypeptide reads, in one-letter code: Cytochrome P450 monooxygenase mpaDE (852 aa).

Over 1–6 (MDYLII) the chain is Lumenal. The helical transmembrane segment at 7–29 (IRITAVAVVLYLTRYVCCLYLHL) threads the bilayer. Over 30–852 (QDVPGPLFAK…DLEDAMEGTK (823 aa)) the chain is Cytoplasmic. Cys448 lines the heme pocket.

This sequence belongs to the cytochrome P450 family. Heme is required as a cofactor.

It localises to the endoplasmic reticulum membrane. The enzyme catalyses 5-methylorsellinate + reduced [NADPH--hemoprotein reductase] + O2 = 4,6-dihydroxy-2-(hydroxymethyl)-3-methylbenzoate + oxidized [NADPH--hemoprotein reductase] + H2O + H(+). The catalysed reaction is 4,6-dihydroxy-2-(hydroxymethyl)-3-methylbenzoate + H(+) = 5,7-dihydroxy-4-methylphthalide + H2O. The protein operates within secondary metabolite biosynthesis; terpenoid biosynthesis. Its function is as follows. Cytochrome P450 monooxygenase; part of the gene cluster that mediates the biosynthesis of mycophenolic acid (MPA), the first isolated antibiotic natural product in the world obtained from a culture of Penicillium brevicompactum in 1893. MpaDE is an endoplasmic reticulum-bound enzyme that catalyzes the conversion of 5-methylorsellinic acid (5MOA) into the phthalide compound 5,7-dihydroxy-4,6-dimethylphthalide (DHMP). MpaDE first catalyzes hydroxylation of 5-MOA to 4,6-dihydroxy-2-(hydroxymethyl)-3-methylbenzoic acid (DHMB), and then acts as a lactone synthase that catalyzes the ring closure to convert DHMB into DHMP. The first step of the pathway is the synthesis of 5-methylorsellinic acid (5MOA) by the cytosolic polyketide synthase mpaC. 5MOA is then converted to the phthalide compound 5,7-dihydroxy-4,6-dimethylphthalide (DHMP) by the endoplasmic reticulum-bound cytochrome P450 monooxygenase mpaDE. MpaDE first catalyzes hydroxylation of 5-MOA to 4,6-dihydroxy-2-(hydroxymethyl)-3-methylbenzoic acid (DHMB). MpaDE then acts as a lactone synthase that catalyzes the ring closure to convert DHMB into DHMP. The next step is the prenylation of DHMP by the Golgi apparatus-associated prenyltransferase mpaA to yield farnesyl-DHMP (FDHMP). The ER-bound oxygenase mpaB then mediates the oxidative cleavage the C19-C20 double bond in FDHMP to yield FDHMP-3C via a mycophenolic aldehyde intermediate. The O-methyltransferase mpaG catalyzes the methylation of FDHMP-3C to yield MFDHMP-3C. After the cytosolic methylation of FDHMP-3C, MFDHMP-3C enters into peroxisomes probably via free diffusion due to its low molecular weight. Upon a peroxisomal CoA ligation reaction, catalyzed by a beta-oxidation component enzyme acyl-CoA ligase ACL891, MFDHMP-3C-CoA would then be restricted to peroxisomes for the following beta-oxidation pathway steps. The peroxisomal beta-oxidation machinery than converts MFDHMP-3C-CoA into MPA_CoA, via a beta-oxidation chain-shortening process. Finally mpaH acts as a peroxisomal acyl-CoA hydrolase with high substrate specificity toward MPA-CoA to release the final product MPA. This chain is Cytochrome P450 monooxygenase mpaDE, found in Penicillium roqueforti (strain FM164).